Consider the following 358-residue polypeptide: Feruloyl esterase B (358 aa).

The first 18 residues, M1 to A18, serve as a signal peptide directing secretion. A catalytic region spans residues A19–I291. Catalysis depends on S136, which acts as the Charge relay system. N-linked (GlcNAc...) asparagine glycans are attached at residues N179 and N246. A gly/Thr-rich linker region spans residues T292–G321. The segment at G297–P318 is disordered. Positions S304–P318 are enriched in low complexity. The CBM1 domain occupies C322–L358.

This sequence belongs to the carbohydrate esterase 1 (CE1) family. Feruloyl esterase type B subfamily.

It localises to the secreted. The enzyme catalyses feruloyl-polysaccharide + H2O = ferulate + polysaccharide.. Involved in degradation of plant cell walls. Hydrolyzes the feruloyl-arabinose ester bond in arabinoxylans as well as the feruloyl-galactose and feruloyl-arabinose ester bonds in pectin. Active against methyl esters of caffeate (MCA), but not sinapate (MSA). This is Feruloyl esterase B (faeB) from Talaromyces stipitatus (strain ATCC 10500 / CBS 375.48 / QM 6759 / NRRL 1006) (Penicillium stipitatum).